The sequence spans 334 residues: Replication factor C subunit 4 (334 aa).

Residue 55–62 (GPPGTGKT) participates in ATP binding.

The protein belongs to the activator 1 small subunits family. In terms of assembly, heteropentamer of various rfc subunits that forms a complex (RFC) with PCNA in the presence of ATP.

The protein localises to the nucleus. Functionally, the elongation of primed DNA templates by DNA polymerase delta and epsilon requires the action of the accessory proteins PCNA and activator 1. This subunit may be involved in the elongation of the multiprimed DNA template. This is Replication factor C subunit 4 (rfc-4) from Caenorhabditis elegans.